The chain runs to 324 residues: Tyrosine--tRNA ligase (324 aa).

Tyrosine 36 serves as a coordination point for L-tyrosine. The short motif at 41–49 is the 'HIGH' region element; that stretch reads PSGKVHLGH. Positions 158, 162, 165, and 180 each coordinate L-tyrosine. The 'KMSKS' region motif lies at 215–219; sequence KMSSS. Serine 218 serves as a coordination point for ATP.

Belongs to the class-I aminoacyl-tRNA synthetase family. TyrS type 3 subfamily. Homodimer.

The protein localises to the cytoplasm. The catalysed reaction is tRNA(Tyr) + L-tyrosine + ATP = L-tyrosyl-tRNA(Tyr) + AMP + diphosphate + H(+). Catalyzes the attachment of tyrosine to tRNA(Tyr) in a two-step reaction: tyrosine is first activated by ATP to form Tyr-AMP and then transferred to the acceptor end of tRNA(Tyr). The protein is Tyrosine--tRNA ligase of Methanopyrus kandleri (strain AV19 / DSM 6324 / JCM 9639 / NBRC 100938).